The primary structure comprises 711 residues: Hydroperoxide isomerase ALOXE3 (711 aa).

One can recognise a PLAT domain in the interval 2 to 119 (AVYRLCVTTG…TVELRPGTAR (118 aa)). In terms of domain architecture, Lipoxygenase spans 120 to 711 (TICQDSLPLL…PPLIENSVSI (592 aa)). Fe cation-binding residues include His408, His413, His588, Asn592, and Ile711.

It belongs to the lipoxygenase family. Fe cation is required as a cofactor. As to expression, predominantly expressed in skin.

The protein resides in the cytoplasm. The enzyme catalyses a hydroperoxyeicosatetraenoate = a hydroxy-epoxy-eicosatetraenoate. It catalyses the reaction (12R)-hydroperoxy-(5Z,8Z,10E,14Z)-eicosatetraenoate = (8R)-hydroxy-(11R,12R)-epoxy-(5Z,9E,14Z)-eicosatrienoate. The catalysed reaction is (12S)-hydroperoxy-(5Z,8Z,10E,14Z)-eicosatetraenoate = (8R)-hydroxy-(11S,12S)-epoxy-(5Z,9E,14Z)-eicosatrienoate. It carries out the reaction (12S)-hydroperoxy-(5Z,8Z,10E,14Z)-eicosatetraenoate = (10R)-hydroxy-(11S,12S)-epoxy-(5Z,8Z,14Z)-eicosatrienoate. The enzyme catalyses (15S)-hydroperoxy-(5Z,8Z,11Z,13E)-eicosatetraenoate = (13R)-hydroxy-(14S,15S)-epoxy-(5Z,8Z,11Z)-eicosatrienoate. It catalyses the reaction (5S)-hydroperoxy-(6E,8Z,11Z,14Z)-eicosatetraenoate = 7R-hydroxy-5S,6S-epoxy-(8Z,11Z,14Z)-eicosatrienoate. The catalysed reaction is (13S)-hydroperoxy-(9Z,11E)-octadecadienoate = 11-hydroxy-(12S,13S)-epoxy-(9Z)-octadecenoate. It carries out the reaction N-[omega-(9R)-hydroperoxy-(10E,12Z)-octadecadienoyloxy]acyl-beta-D-glucosyl-(1&lt;-&gt;1)-octadecasphing-4E-enine = a N-[omega-(9R,10R)-epoxy-(13R)-hydroxy-(11E)-octadecenoyloxy]acyl-beta-D-glucosyl-(1&lt;-&gt;1)-sphing-4E-enine. The enzyme catalyses a N-[omega-(9R)-hydroperoxy-(10E,12Z)-octadecadienoyloxy]-acylsphin-4E-enine = a N-[omega-(9R,10R)-epoxy-(13R)-hydroxy-(11E)-octadecenoyloxy]-acylsphing-4E-enine. It catalyses the reaction a hydroperoxyeicosatetraenoate = an oxoeicosatetraenoate + H2O. The catalysed reaction is (12R)-hydroperoxy-(5Z,8Z,10E,14Z)-eicosatetraenoate = 12-oxo-(5Z,8Z,10E,14Z)-eicosatetraenoate + H2O. It carries out the reaction (12S)-hydroperoxy-(5Z,8Z,10E,14Z)-eicosatetraenoate = 12-oxo-(5Z,8Z,10E,14Z)-eicosatetraenoate + H2O. The enzyme catalyses (15S)-hydroperoxy-(5Z,8Z,11Z,13E)-eicosatetraenoate = 15-oxo-(5Z,8Z,11Z,13E)-eicosatetraenoate + H2O. It catalyses the reaction (13S)-hydroperoxy-(9Z,11E)-octadecadienoate = 13-oxo-(9Z,11E)-octadecadienoate + H2O. The catalysed reaction is (8S)-hydroperoxy-(5Z,9E,11Z,14Z)-eicosatetraenoate = (10R)-hydroxy-(8S,9S)-epoxy-(5Z,11Z,14Z)-eicosatrienoate. It carries out the reaction (8R)-hydroperoxy-(5Z,9E,11Z,14Z)-eicosatetraenoate = 8-oxo-(5Z,9E,11Z,14Z)-eicosatetraenoate + H2O. The enzyme catalyses (8S)-hydroperoxy-(5Z,9E,11Z,14Z)-eicosatetraenoate = 8-oxo-(5Z,9E,11Z,14Z)-eicosatetraenoate + H2O. It participates in lipid metabolism; hydroperoxy eicosatetraenoic acid biosynthesis. It functions in the pathway lipid metabolism; sphingolipid metabolism. Lipoxygenase activity is activated by 13(S)-HPODE leading to an active free ferric enzyme. The lipoxygenase and hydroperoxide isomerase activities are in competition and are reciprocally regulated by oxygen. The oxygen reacts with an epoxyallylic radical intermediate leading to an epoxyallylic peroxyl radical, which, due to its limited reactivity within the enzyme active site, it dissociates and leaves the enzyme in the activated free ferric state. In terms of biological role, non-heme iron-containing lipoxygenase which is atypical in that it displays a prominent hydroperoxide isomerase activity and a reduced lipoxygenases activity. The hydroperoxide isomerase activity catalyzes the isomerization of hydroperoxides, derived from arachidonic and linoleic acid by ALOX12B, into hepoxilin-type epoxyalcohols and ketones. In presence of oxygen, oxygenates polyunsaturated fatty acids, including arachidonic acid, to produce fatty acid hydroperoxides. In the skin, acts downstream of ALOX12B on the linoleate moiety of esterified omega-hydroxyacyl-sphingosine (EOS) ceramides to produce an epoxy-ketone derivative, a crucial step in the conjugation of omega-hydroxyceramide to membrane proteins. Therefore plays a crucial role in the synthesis of corneocytes lipid envelope and the establishment of the skin barrier to water loss. In parallel, it may have a signaling function in barrier formation through the production of hepoxilins metabolites. Also plays a role in adipocyte differentiation through hepoxilin A3 and hepoxilin B3 production which in turn activate PPARG. Through the production of hepoxilins in the spinal cord, it may regulate inflammatory tactile allodynia. This Homo sapiens (Human) protein is Hydroperoxide isomerase ALOXE3.